A 635-amino-acid chain; its full sequence is Very-long-chain aldehyde decarbonylase GL1-6 (635 aa).

Transmembrane regions (helical) follow at residues 46–66 (LLNF…QLWI), 100–120 (IILT…AQVA), 127–147 (GMVV…YWLH), and 183–203 (VVYF…GTVS). The Fatty acid hydroxylase domain maps to 139 to 273 (VEFLYYWLHR…MPVYDYIYGT (135 aa)).

The protein belongs to the sterol desaturase family. Homodimer.

Its subcellular location is the endoplasmic reticulum membrane. It catalyses the reaction a long-chain fatty aldehyde + 2 NADPH + O2 + H(+) = a long-chain alkane + formate + 2 NADP(+) + H2O. Aldehyde decarbonylase involved in the conversion of aldehydes to alkanes. Core component of a very-long-chain alkane synthesis complex. In Oryza sativa subsp. indica (Rice), this protein is Very-long-chain aldehyde decarbonylase GL1-6.